Here is a 586-residue protein sequence, read N- to C-terminus: Proline--tRNA ligase (586 aa).

This sequence belongs to the class-II aminoacyl-tRNA synthetase family. ProS type 1 subfamily. In terms of assembly, homodimer.

It localises to the cytoplasm. The catalysed reaction is tRNA(Pro) + L-proline + ATP = L-prolyl-tRNA(Pro) + AMP + diphosphate. In terms of biological role, catalyzes the attachment of proline to tRNA(Pro) in a two-step reaction: proline is first activated by ATP to form Pro-AMP and then transferred to the acceptor end of tRNA(Pro). As ProRS can inadvertently accommodate and process non-cognate amino acids such as alanine and cysteine, to avoid such errors it has two additional distinct editing activities against alanine. One activity is designated as 'pretransfer' editing and involves the tRNA(Pro)-independent hydrolysis of activated Ala-AMP. The other activity is designated 'posttransfer' editing and involves deacylation of mischarged Ala-tRNA(Pro). The misacylated Cys-tRNA(Pro) is not edited by ProRS. The chain is Proline--tRNA ligase from Leptospira biflexa serovar Patoc (strain Patoc 1 / Ames).